Reading from the N-terminus, the 263-residue chain is Hydroxyethylthiazole kinase (263 aa).

Met-45 serves as a coordination point for substrate. The ATP site is built by Arg-121 and Ser-167. Residue Gly-194 participates in substrate binding.

The protein belongs to the Thz kinase family. Mg(2+) serves as cofactor.

It catalyses the reaction 5-(2-hydroxyethyl)-4-methylthiazole + ATP = 4-methyl-5-(2-phosphooxyethyl)-thiazole + ADP + H(+). The protein operates within cofactor biosynthesis; thiamine diphosphate biosynthesis; 4-methyl-5-(2-phosphoethyl)-thiazole from 5-(2-hydroxyethyl)-4-methylthiazole: step 1/1. Catalyzes the phosphorylation of the hydroxyl group of 4-methyl-5-beta-hydroxyethylthiazole (THZ). The sequence is that of Hydroxyethylthiazole kinase from Vibrio campbellii (strain ATCC BAA-1116).